The sequence spans 130 residues: Protachykinin-1 (130 aa).

The N-terminal stretch at 1 to 19 (MKILVAVAVIFFISTQLSA) is a signal peptide. The propeptide occupies 20-56 (EEIGANDDFNYWSDWSDSDQIKEEMPEPFEHLLQRIA). Residues Met68 and Met107 each carry the methionine amide modification.

It belongs to the tachykinin family. The substance P form is cleaved at Pro-59 by the prolyl endopeptidase FAP (seprase) activity (in vitro). Substance P is also cleaved and degraded by Angiotensin-converting enzyme (ACE) and neprilysin (MME).

It is found in the secreted. In terms of biological role, tachykinins are active peptides which excite neurons, evoke behavioral responses, are potent vasodilators and secretagogues, and contract (directly or indirectly) many smooth muscles. The sequence is that of Protachykinin-1 (TAC1) from Bos taurus (Bovine).